The chain runs to 159 residues: 18.0 kDa class I heat shock protein (159 aa).

Positions 45–159 constitute a sHSP domain; the sequence is ETAAFANTHI…PEVKSIHISG (115 aa).

It belongs to the small heat shock protein (HSP20) family. In terms of assembly, forms oligomeric structures.

The protein localises to the cytoplasm. The chain is 18.0 kDa class I heat shock protein from Daucus carota (Wild carrot).